The primary structure comprises 357 residues: Protein-glutamate methylesterase/protein-glutamine glutaminase 1 (357 aa).

Residues 7 to 125 enclose the Response regulatory domain; it reads RAVIIDDSLL…QFDPEEIGNI (119 aa). D58 carries the 4-aspartylphosphate modification. In terms of domain architecture, CheB-type methylesterase spans 162-344; that stretch reads KKSPIQAICI…VEYIEPVTEI (183 aa). Active-site residues include S174, H201, and D297.

Belongs to the CheB family. Post-translationally, phosphorylated by CheA. Phosphorylation of the N-terminal regulatory domain activates the methylesterase activity.

Its subcellular location is the cytoplasm. The catalysed reaction is [protein]-L-glutamate 5-O-methyl ester + H2O = L-glutamyl-[protein] + methanol + H(+). The enzyme catalyses L-glutaminyl-[protein] + H2O = L-glutamyl-[protein] + NH4(+). Its function is as follows. Involved in chemotaxis. Part of a chemotaxis signal transduction system that modulates chemotaxis in response to various stimuli. Catalyzes the demethylation of specific methylglutamate residues introduced into the chemoreceptors (methyl-accepting chemotaxis proteins or MCP) by CheR. Also mediates the irreversible deamidation of specific glutamine residues to glutamic acid. The chain is Protein-glutamate methylesterase/protein-glutamine glutaminase 1 from Leptospira interrogans serogroup Icterohaemorrhagiae serovar Lai (strain 56601).